The sequence spans 2042 residues: Protein mini spindles (2042 aa).

2 TOG regions span residues 1–229 (MAED…VEPS) and 267–505 (MDLL…KVAG). Positions 1 to 505 (MAEDTEYKKL…KAEIKIKVAG (505 aa)) are binds tubulin. Promotes microtubule polymerization regions lie at residues 1 to 516 (MAED…ASAP) and 581 to 1080 (TPEE…EKAR). 7 HEAT repeats span residues 120-157 (EKQEAVVEELVKGMEAKNPKIVSACVAATTLALREFGH), 160-197 (IGVKPLIKKLAPLMSDRDKTVRDEGKQLAVEIYRWIGA), 270-311 (LDPV…DHPK), 315-353 (GEYGALVSALKKVITKDSNVVLVAMAGKCLALLAKGLAK), 357-394 (NYASACVPSLLEKFKEKKPNVVTALREAIDAIYASTSL), 396-433 (AQQESIVESLSNKNPSVKSETALFIARALTRTQPTALN), and 440-478 (LTTSLVKTLNEPDPTVRDSSAEALGTLIKLMGDKAVTPL). The segment at 498–821 (EIKIKVAGPK…PKPVRGVQRS (324 aa)) is association with microtubule lattice. The tract at residues 506–572 (PKKETRPASA…PTAALKAGGK (67 aa)) is disordered. A compositionally biased stretch (low complexity) spans 513–531 (ASAPTAKAAAPAKTVAGSV). A TOG 3 region spans residues 581–814 (TPEELQEKSE…KNVGEKPPKP (234 aa)). HEAT repeat units follow at residues 587 to 624 (EKSEEILPAEILNGLVDSNWKNRLAAVEQLLGEISGFD), 625 to 662 (AKQAGISQILIRTISGRKPGLKEMNFQVLKFKLDIIRS), 672 to 710 (TTVDLVINEIIEKLADAKNGAAAADVLSAFAEATKLEYV), and 745 to 782 (LQPKTLIEDVRKGVQSTNPTVRASAIQMVGTMSMYMGK). The tract at residues 804–849 (DKNVGEKPPKPVRGVQRSSGGTAGNSPDNEDDDGGAAGEEEPINMA) is disordered. The span at 819 to 830 (QRSSGGTAGNSP) shows a compositional bias: polar residues. Residues 831–845 (DNEDDDGGAAGEEEP) show a composition bias toward acidic residues. 2 TOG regions span residues 849–1087 (ADLL…PVKP) and 1179–1415 (TELL…KPTP). 4 HEAT repeats span residues 856-893 (DIAPQITEALLKEMSDKDWKTRNEGLTKLQAIISEARL), 896-933 (PSIGDLAPALAHRLVDSNAKIAQTTLAICEQLATAMGA), 937-974 (NHVRNLFPGFLHALGDNKSFVRAAALNCINSFGEKGGY), and 1017-1054 (EDIHSMVPHLYAHICDRNADVRKNANEAVLGIMIHLGF). A disordered region spans residues 1083 to 1140 (LPVKPLPKGKHQAPIPEEPKLKTVRGGGAGGAPGIQKSATARVAGGQDKQVPARKKDE). The association with microtubule lattice stretch occupies residues 1099–1428 (EEPKLKTVRG…VDVPAPQRHD (330 aa)). HEAT repeat units lie at residues 1205 to 1242 (RYHLKVIEQLSEDLAGNSKALVCNLDLILKWLTLRFYD), 1272 to 1309 (NEGSSFVPHLLLKIGDPKDAVRNGVRRVLRQVILVFPF), 1311 to 1344 (KVFGYVMEGLKSKNARQRTECLDELTFLIESYGM), and 1346 to 1383 (ICPQSAVREIARQISDRDNSVRNAALNCIVQVFFLSGE). 2 disordered regions span residues 1407–1455 (AKKT…TFDQ) and 1940–1959 (NAGSTQDNRTDVNYQNNGPD). Polar residues predominate over residues 1940–1957 (NAGSTQDNRTDVNYQNNG).

The protein belongs to the TOG/XMAP215 family. Interacts with tacc, dgt6. Interacts with mv. Interacts with Patronin.

The protein localises to the cytoplasm. It is found in the cytoskeleton. It localises to the microtubule organizing center. Its subcellular location is the centrosome. The protein resides in the spindle. The protein localises to the perinuclear region. Functionally, binds to the plus end of microtubules and regulates microtubule dynamics and microtubule organization. Function in neurons is essential for adult survival, and is important for climbing behavior and activity. Promotes cytoplasmic microtubule nucleation and elongation. May act as a microtubule antipause factor that rapidly catalyzes the transition from pause to either growth or shrinkage. Involved in mitotic spindle elongation. Involved in the establishment of cell polarity and mitotic spindle orientation in neuroblasts. Required for maintaining the bipolarity of acentrosomal meiotic spindles; the function is dependent on tacc and involves ncd. Involved in oocyte microtubule cytoskeleton organization and bicoid mRNA localization. Seems to be involved in elongation of kinetochore-derived microtubule fibers. In fat body cells, essential component of perinuclear non-centrosomal microtubule-organizing centers (ncMTOCs) which function to accommodate the organization of microtubule (MT) networks to control nuclear positioning and dynein motor-based retrograde endosomal trafficking. Within the ncMTOCs, Msp300 and shot anchors the ncMTOC at the nuclear surface and recruits the MT minus-end regulators Patronin and Nin for assembly, anchoring and/or stabilization of circumferential and radial MTs at the ncMTOCs. Patronin, and perhaps Nin, then recruits msps to the ncMTOC where it is required for the gamma-tubulin-independent elongation and assembly of radial MTs. This chain is Protein mini spindles (msps), found in Drosophila melanogaster (Fruit fly).